A 531-amino-acid polypeptide reads, in one-letter code: L-aspartate oxidase (531 aa).

Residues 11-14, Lys33, 40-47, 151-152, and Asp205 contribute to the FAD site; these read SGAA, NSVYAQGG, and TA. Catalysis depends on Arg272, which acts as the Proton donor/acceptor. FAD-binding positions include Glu353 and 369-370; that span reads SL.

It belongs to the FAD-dependent oxidoreductase 2 family. NadB subfamily. In terms of assembly, monomer. Homodimer. Requires FAD as cofactor.

It localises to the cytoplasm. The enzyme catalyses L-aspartate + O2 = iminosuccinate + H2O2. It catalyses the reaction fumarate + L-aspartate = iminosuccinate + succinate. The protein operates within cofactor biosynthesis; NAD(+) biosynthesis; iminoaspartate from L-aspartate (oxidase route): step 1/1. Catalyzes the oxidation of L-aspartate to iminoaspartate, the first step in the de novo biosynthesis of NAD(+). Can use either oxygen or fumarate as electron acceptors, which allows the enzyme to be functional under aerobic and anaerobic conditions. In Bacillus subtilis (strain 168), this protein is L-aspartate oxidase.